Here is a 501-residue protein sequence, read N- to C-terminus: Cytochrome P450 3A31 (501 aa).

Cysteine 440 contacts heme.

The protein belongs to the cytochrome P450 family. The cofactor is heme. Expressed constitutively in liver.

Its subcellular location is the endoplasmic reticulum membrane. It is found in the microsome membrane. The catalysed reaction is an organic molecule + reduced [NADPH--hemoprotein reductase] + O2 = an alcohol + oxidized [NADPH--hemoprotein reductase] + H2O + H(+). Its function is as follows. Cytochromes P450 are a group of heme-thiolate monooxygenases. In liver microsomes, this enzyme is involved in an NADPH-dependent electron transport pathway. It oxidizes a variety of structurally unrelated compounds, including steroids, fatty acids, and xenobiotics. This Mesocricetus auratus (Golden hamster) protein is Cytochrome P450 3A31 (CYP3A31).